Reading from the N-terminus, the 34-residue chain is Photosystem II reaction center protein M (34 aa).

A helical membrane pass occupies residues 5–25 (ILAFIATTLFVLVPTAFLLII).

This sequence belongs to the PsbM family. As to quaternary structure, PSII is composed of 1 copy each of membrane proteins PsbA, PsbB, PsbC, PsbD, PsbE, PsbF, PsbH, PsbI, PsbJ, PsbK, PsbL, PsbM, PsbT, PsbX, PsbY, PsbZ, Psb30/Ycf12, at least 3 peripheral proteins of the oxygen-evolving complex and a large number of cofactors. It forms dimeric complexes.

Its subcellular location is the plastid. It localises to the chloroplast thylakoid membrane. One of the components of the core complex of photosystem II (PSII). PSII is a light-driven water:plastoquinone oxidoreductase that uses light energy to abstract electrons from H(2)O, generating O(2) and a proton gradient subsequently used for ATP formation. It consists of a core antenna complex that captures photons, and an electron transfer chain that converts photonic excitation into a charge separation. This subunit is found at the monomer-monomer interface. The polypeptide is Photosystem II reaction center protein M (Citrus sinensis (Sweet orange)).